Here is a 404-residue protein sequence, read N- to C-terminus: Lupus La protein homolog (404 aa).

The HTH La-type RNA-binding domain occupies 7-99 (NEKMAALEAK…RRSPSKPLPE (93 aa)). S92 and S94 each carry phosphoserine. Residues 111–187 (RSVYIKGFPT…TDLLILFKED (77 aa)) form the RRM domain. K116 carries the N6-acetyllysine modification. T120 carries the phosphothreonine modification. K128 is modified (N6-acetyllysine). Phosphoserine is present on S225. Residues 227–348 (EEKIGCLLKF…KGKGNKAAQA (122 aa)) enclose the xRRM domain. 2 positions are modified to N6-acetyllysine: K328 and K341. Residues 329–342 (WKSKGRRFKGKGKG) are compositionally biased toward basic residues. Positions 329–404 (WKSKGRRFKG…QKTENGAGDQ (76 aa)) are disordered. Low complexity predominate over residues 343–354 (NKAAQAGSAKGK). Position 360 is an N6-acetyllysine (K360). At T362 the chain carries Phosphothreonine. Position 366 is a phosphoserine (S366). Over residues 381–391 (RAREETDKEPP) the composition is skewed to basic and acidic residues.

Interacts with DDX15. May interact with RUFY1. Post-translationally, phosphorylated in the C-terminal part of the protein.

It is found in the nucleus. Functionally, binds to the 3' poly(U) terminus of nascent RNA polymerase III transcripts, protecting them from exonuclease digestion and facilitating their folding and maturation. The protein is Lupus La protein homolog (SSB) of Bos taurus (Bovine).